We begin with the raw amino-acid sequence, 175 residues long: MALNVFQKQEVVKELAGVATKAHSLIVAEYAGITVPQMTAMRKQARESGVYLKVVKNKLAARALGDTEYAVIKEKLIGPLLYAFSLEDPGAAGRLIKEFSKKHDKLKSKAVSLGGVLYPAGHVDVLASLPTRLQALAMLARVLSEPVTLFARAIKAMADDKSETFAVSSPETSEA.

It belongs to the universal ribosomal protein uL10 family. Part of the ribosomal stalk of the 50S ribosomal subunit. The N-terminus interacts with L11 and the large rRNA to form the base of the stalk. The C-terminus forms an elongated spine to which L12 dimers bind in a sequential fashion forming a multimeric L10(L12)X complex.

In terms of biological role, forms part of the ribosomal stalk, playing a central role in the interaction of the ribosome with GTP-bound translation factors. The chain is Large ribosomal subunit protein uL10 from Xylella fastidiosa (strain M23).